Here is a 515-residue protein sequence, read N- to C-terminus: 2-isopropylmalate synthase (515 aa).

A Pyruvate carboxyltransferase domain is found at 5-267 (VIIFDTTLRD…DTHINTQEIH (263 aa)). Residues Asp14, His202, His204, and Asn238 each contribute to the Mn(2+) site. A regulatory domain region spans residues 392-515 (VLDKLSAHST…VADIKNHKHH (124 aa)).

The protein belongs to the alpha-IPM synthase/homocitrate synthase family. LeuA type 1 subfamily. In terms of assembly, homodimer. Mn(2+) is required as a cofactor.

The protein resides in the cytoplasm. It catalyses the reaction 3-methyl-2-oxobutanoate + acetyl-CoA + H2O = (2S)-2-isopropylmalate + CoA + H(+). It participates in amino-acid biosynthesis; L-leucine biosynthesis; L-leucine from 3-methyl-2-oxobutanoate: step 1/4. Its function is as follows. Catalyzes the condensation of the acetyl group of acetyl-CoA with 3-methyl-2-oxobutanoate (2-ketoisovalerate) to form 3-carboxy-3-hydroxy-4-methylpentanoate (2-isopropylmalate). The protein is 2-isopropylmalate synthase of Haemophilus influenzae (strain ATCC 51907 / DSM 11121 / KW20 / Rd).